Here is a 307-residue protein sequence, read N- to C-terminus: Membrane protein insertase YidC 2 (307 aa).

The N-terminal stretch at 1–23 (MKLTLNRILFSGLALSILLTLTG) is a signal peptide. Cysteine 24 carries N-palmitoyl cysteine lipidation. Residue cysteine 24 is the site of S-diacylglycerol cysteine attachment. A run of 5 helical transmembrane segments spans residues 58 to 78 (LGYG…ILPL), 135 to 155 (LGGI…AMYF), 179 to 199 (VLTA…MMAV), 209 to 225 (TMMY…SFSL), and 231 to 251 (LYWL…TYLL). Residues 263–307 (YAKNPPKAYQSTSSRKDVTPSQNMEQANLPKKIKSNRNAGKQRKR) are disordered. Residues 271–288 (YQSTSSRKDVTPSQNMEQ) are compositionally biased toward polar residues. The segment covering 293–307 (KKIKSNRNAGKQRKR) has biased composition (basic residues).

Belongs to the OXA1/ALB3/YidC family. Type 2 subfamily.

The protein localises to the cell membrane. Its function is as follows. Required for the insertion and/or proper folding and/or complex formation of integral membrane proteins into the membrane. Involved in integration of membrane proteins that insert both dependently and independently of the Sec translocase complex, as well as at least some lipoproteins. The protein is Membrane protein insertase YidC 2 of Streptococcus pyogenes serotype M1.